We begin with the raw amino-acid sequence, 170 residues long: Small ribosomal subunit protein uS9 (170 aa).

A disordered region spans residues 1–47; that stretch reads MAETTPEQPLEEIDIDSYTTESEVPVEGEYTSESMASAFGEPQPAAG.

This sequence belongs to the universal ribosomal protein uS9 family.

This is Small ribosomal subunit protein uS9 (rpsI) from Streptomyces coelicolor (strain ATCC BAA-471 / A3(2) / M145).